We begin with the raw amino-acid sequence, 494 residues long: Ubiquitin carboxyl-terminal hydrolase 14 (494 aa).

Residues 4–80 (YSVTVKWGKE…MMGSADALPE (77 aa)) form the Ubiquitin-like domain. Phosphothreonine is present on T52. The USP domain maps to 105–483 (CGLTNLGNTC…IAYVLLYGPR (379 aa)). C114 functions as the Nucleophile in the catalytic mechanism. A phosphoserine mark is found at S143 and S148. At T235 the chain carries Phosphothreonine. Phosphoserine is present on residues S237, S302, and S432. H435 (proton acceptor) is an active-site residue. Position 449 is an N6-acetyllysine (K449).

The protein belongs to the peptidase C19 family. USP14/UBP6 subfamily. In terms of assembly, homodimer (Potential). Associates with the 26S proteasome. Interacts with FANCC, CXCR4 and ERN1. Interacts with TRIM14; this interaction recruits USP14 to cleave ubiquitin chains of CGAS and KDM4D.

Its subcellular location is the cytoplasm. It is found in the cell membrane. It catalyses the reaction Thiol-dependent hydrolysis of ester, thioester, amide, peptide and isopeptide bonds formed by the C-terminal Gly of ubiquitin (a 76-residue protein attached to proteins as an intracellular targeting signal).. Proteasome-associated deubiquitinase which releases ubiquitin from the proteasome targeted ubiquitinated proteins. Ensures the regeneration of ubiquitin at the proteasome. Is a reversibly associated subunit of the proteasome and a large fraction of proteasome-free protein exists within the cell. Required for the degradation of the chemokine receptor CXCR4 which is critical for CXCL12-induced cell chemotaxis. Also serves as a physiological inhibitor of endoplasmic reticulum-associated degradation (ERAD) under the non-stressed condition by inhibiting the degradation of unfolded endoplasmic reticulum proteins via interaction with ERN1. Indispensable for synaptic development and function at neuromuscular junctions (NMJs). Plays a role in the innate immune defense against viruses by stabilizing the viral DNA sensor CGAS and thus inhibiting its autophagic degradation. Inhibits OPTN-mediated selective autophagic degradation of KDM4D and thereby negatively regulates H3K9me2 and H3K9me3. This Homo sapiens (Human) protein is Ubiquitin carboxyl-terminal hydrolase 14 (USP14).